We begin with the raw amino-acid sequence, 246 residues long: MSQVNMRDMLKAGVHFGHQTRYWNPKMGKFIFGARNKIHIINLEKTLPMFNEALTFVERLAAGKNKILFVGTKRSAGKIVREEAARCGMPYVDHRWLGGMLTNYKTIRQSIKRLRDLETQAQDGTFDKLTKKEALMRSRDLEKLERSLGGIKDMGGLPDALFVIDVDHERIAITEANKLGIPVIGVVDTNSSPEGVDYVIPGNDDAIRAVQLYLNSMAEAVIRGKQGAATSADEFVEEAPAESAEG.

This sequence belongs to the universal ribosomal protein uS2 family.

This Pseudomonas paraeruginosa (strain DSM 24068 / PA7) (Pseudomonas aeruginosa (strain PA7)) protein is Small ribosomal subunit protein uS2.